A 436-amino-acid polypeptide reads, in one-letter code: AMSH-like protease (436 aa).

An N-acetylmethionine modification is found at Met-1. A phosphoserine mark is found at Ser-25 and Ser-242. The 129-residue stretch at 269-397 (VVLSRDLCHK…IFRLTNAGML (129 aa)) folds into the MPN domain. 7 residues coordinate Zn(2+): His-347, His-349, Asp-360, His-362, Cys-402, His-408, and His-410. Residues 347–360 (HTHPTQTAFLSSVD) carry the JAMM motif motif.

It belongs to the peptidase M67C family. It depends on Zn(2+) as a cofactor. As to expression, ubiquitously expressed. Isoform 1 is widely expressed while isoform 2 is testis-specific.

In terms of biological role, zinc metalloprotease that specifically cleaves 'Lys-63'-linked polyubiquitin chains. Acts as a positive regulator of the TORC1 signaling pathway by mediating 'Lys-63'-linked deubiquitination of SESN2, thereby inhibiting SESN2-interaction with the GATOR2 complex. Does not cleave 'Lys-48'-linked polyubiquitin chains. This chain is AMSH-like protease (Stambpl1), found in Mus musculus (Mouse).